We begin with the raw amino-acid sequence, 1095 residues long: 1-phosphatidylinositol 4,5-bisphosphate phosphodiesterase (1095 aa).

The region spanning 319-469 is the PI-PLC X-box domain; that stretch reads MEMDQPLAHY…LKRKILIKNK (151 aa). Catalysis depends on residues His-334 and His-381. Substrate is bound by residues Lys-467 and Lys-469. Positions 487 to 529 are disordered; the sequence is ELKTDDDPEEDASAGKPPEAAAAPAPAPEAAAAAEGAAEGGGG. Residues 500-523 show a composition bias toward low complexity; sequence AGKPPEAAAAPAPAPEAAAAAEGA. The PI-PLC Y-box domain occupies 550-666; the sequence is LSSMVNYAQP…GYLLKPDFMR (117 aa). 2 residues coordinate substrate: Ser-579 and Arg-606. Residues 666–794 form the C2 domain; it reads RRADKDFDPF…SLRTEANFPM (129 aa). 2 disordered regions span residues 842 to 863 and 1000 to 1030; these read IEEQ…EKKE and QAKM…LREK. Composition is skewed to basic and acidic residues over residues 852-863 and 1007-1030; these read DAGKAKEEEKKE and TAKE…LREK.

In terms of assembly, interacts with inaD. In terms of tissue distribution, abundantly expressed in the adult retina.

The enzyme catalyses a 1,2-diacyl-sn-glycero-3-phospho-(1D-myo-inositol-4,5-bisphosphate) + H2O = 1D-myo-inositol 1,4,5-trisphosphate + a 1,2-diacyl-sn-glycerol + H(+). Its function is as follows. The production of the second messenger molecules diacylglycerol (DAG) and inositol 1,4,5-trisphosphate (IP3) is mediated by activated phosphatidylinositol-specific phospholipase C enzymes. Essential component of the phototransduction pathway. Essential downstream component of a hh-signaling pathway which regulates the Duox-dependent gut immune response to bacterial uracil; required for the activation of Cad99C and consequently Cad99C-dependent endosome formation, which is essential for the Duox-dependent production of reactive oxygen species (ROS) in response to intestinal bacterial infection. The polypeptide is 1-phosphatidylinositol 4,5-bisphosphate phosphodiesterase (Drosophila melanogaster (Fruit fly)).